The sequence spans 192 residues: Protein GrpE (192 aa).

A disordered region spans residues 1-41 (MSKEEFPHEKDLKDEVTPDKAPKKDPKAAPKEEVKENPVEN).

The protein belongs to the GrpE family. As to quaternary structure, homodimer.

It is found in the cytoplasm. Its function is as follows. Participates actively in the response to hyperosmotic and heat shock by preventing the aggregation of stress-denatured proteins, in association with DnaK and GrpE. It is the nucleotide exchange factor for DnaK and may function as a thermosensor. Unfolded proteins bind initially to DnaJ; upon interaction with the DnaJ-bound protein, DnaK hydrolyzes its bound ATP, resulting in the formation of a stable complex. GrpE releases ADP from DnaK; ATP binding to DnaK triggers the release of the substrate protein, thus completing the reaction cycle. Several rounds of ATP-dependent interactions between DnaJ, DnaK and GrpE are required for fully efficient folding. The sequence is that of Protein GrpE from Lactobacillus johnsonii (strain CNCM I-12250 / La1 / NCC 533).